The chain runs to 880 residues: Translation initiation factor IF-2 (880 aa).

Composition is skewed to basic and acidic residues over residues 34–43, 59–69, 82–94, 110–131, 167–181, 230–240, and 248–261; these read HMSSLDDKQV, TEKDSKNSSRK, RRRD…DNRH, NRRE…DLLN, KKVE…EKLE, QKEETKPTRKK, and EVPD…EHSD. The segment at 34–297 is disordered; the sequence is HMSSLDDKQV…KERPLPETLV (264 aa). The segment covering 262–275 has biased composition (basic residues); it reads KARRRRNKKNKRIN. Over residues 276–292 the composition is skewed to basic and acidic residues; that stretch reads QSKEVKKQPTQRKERPL. The tr-type G domain occupies 381–550; sequence KRPPVVTIMG…LLQADVMELK (170 aa). Residues 390-397 form a G1 region; the sequence is GHVDHGKT. Residue 390 to 397 coordinates GTP; sequence GHVDHGKT. Residues 415 to 419 form a G2 region; it reads GITQR. The interval 436-439 is G3; sequence DTPG. GTP is bound by residues 436 to 440 and 490 to 493; these read DTPGH and NKID. Residues 490–493 form a G4 region; it reads NKID. Residues 526–528 are G5; it reads SAK.

Belongs to the TRAFAC class translation factor GTPase superfamily. Classic translation factor GTPase family. IF-2 subfamily.

It localises to the cytoplasm. Functionally, one of the essential components for the initiation of protein synthesis. Protects formylmethionyl-tRNA from spontaneous hydrolysis and promotes its binding to the 30S ribosomal subunits. Also involved in the hydrolysis of GTP during the formation of the 70S ribosomal complex. The sequence is that of Translation initiation factor IF-2 from Lactobacillus johnsonii (strain CNCM I-12250 / La1 / NCC 533).